Reading from the N-terminus, the 30-residue chain is Beta/omega-theraphotoxin-Tp2a (30 aa).

Cystine bridges form between Cys-2–Cys-16, Cys-9–Cys-21, and Cys-15–Cys-25. The flexible tail region important for ability to inhibit Nav channel stretch occupies residues 26 to 30; that stretch reads KKKLW. A hydrophobic dyad that anchors the toxin into the membrane while positioning it over the S3 helix of Nav1.7/SCN9A region spans residues 29–30; the sequence is LW.

This sequence belongs to the neurotoxin 30 (phrixotoxin) family. In terms of tissue distribution, expressed by the venom gland.

Its subcellular location is the secreted. Gating-modifier toxin that targets voltage-gated sodium channels with a selective activity on Nav1.7/SCN9A (IC(50)=1-1.5 nM). It inhibits both activation and inactivation. For inhibition of activation, it is 100-fold more selective for Nav1.7/SCN9A (IC(50)=0.26-3) than for other sodium channels (Nav1.2/SCN2A (IC(50)=40-540 nM), Nav1.3/SCN3A (IC(50)=102 nM), Nav1.4/SCN4A (IC(50)=30-39 nM), Nav1.5/SCN5A (IC(50)=19-90 nM), Nav1.6/SCN8A (IC(50)=26 nM), and Nav1.8/SCN10A (IC(50)=146 nM)). For inhibition of inactivation, it is 20-fold more potent in inhibiting inactivation on Nav1.7/SCN9A (IC(50)=250 nM) than other channels (about 4.6 uM for all channels). It also weakly inhibits Cav1.2/CACNA1C and Cav3.2/CACNA1H (29% block at 1 uM). It inhibits Nav1.7/SCN9A activation by interacting with DII and impairs Nav1.7/SCN9A inactivation by interacting with DIV. It docks on top of the DII S3 helix Nav1.7/SCN9A. It is about 60-fold less active on Nav1.7/SCN9A at depolarized potential (0 mV; IC(50)=15 nM), compared to -120 mV potential (IC(50)=0.26 nM). This toxin binds to lipid membrane. This ability correlates with hNav1.7/SCN9A inhibition, showing that membrane binding is the first step in the inhibitory mechanism of this toxin. It inhibits Nav1.2/SCN2A less potently when it is coexpressed with SCN2B or SCN4B than when it is expressed alone, showing that beta subunits (SCN2B and SCN4B) have a protective effect. In Thrixopelma pruriens (Peruvian green velvet tarantula), this protein is Beta/omega-theraphotoxin-Tp2a.